Reading from the N-terminus, the 990-residue chain is Storkhead-box protein 1 (990 aa).

A compositionally biased stretch (basic and acidic residues) spans 396-408; that stretch reads TTRHKDSSKEVIG. Disordered regions lie at residues 396-471, 562-586, 712-736, and 809-832; these read TTRH…VHHL, VAKA…PRRV, GLSD…DGGC, and LFSN…SRIP. The span at 416 to 431 shows a compositional bias: basic residues; sequence KSRRRGSSHKGRHKAR. Residues 809-830 show a composition bias toward polar residues; it reads LFSNAGESPNPDLSDNPGQNSR.

Detected in sensory epithelial cells of the inner ear but not in adjacent surrounding tissue (at protein level).

It localises to the nucleus. Its subcellular location is the cytoplasm. The protein resides in the cytoskeleton. It is found in the microtubule organizing center. The protein localises to the centrosome. In terms of biological role, involved in regulating the levels of reactive oxidative species and reactive nitrogen species and in mitochondrial homeostasis in the placenta. Required for regulation of inner ear epithelial cell proliferation via the AKT signaling pathway. Involved in cell cycle regulation by binding to the CCNB1 promoter, up-regulating its expression and promoting mitotic entry. Induces phosphorylation of MAPT/tau. The protein is Storkhead-box protein 1 of Mus musculus (Mouse).